Here is a 338-residue protein sequence, read N- to C-terminus: Lipoate-protein ligase A (338 aa).

The BPL/LPL catalytic domain maps to 29–216 (SPDQRVLFLW…AFFAYYDEQV (188 aa)). Residues R71, 76–79 (GAVF), and K134 each bind ATP. K134 is a binding site for (R)-lipoate.

This sequence belongs to the LplA family. As to quaternary structure, monomer.

It localises to the cytoplasm. It catalyses the reaction L-lysyl-[lipoyl-carrier protein] + (R)-lipoate + ATP = N(6)-[(R)-lipoyl]-L-lysyl-[lipoyl-carrier protein] + AMP + diphosphate + H(+). It functions in the pathway protein modification; protein lipoylation via exogenous pathway; protein N(6)-(lipoyl)lysine from lipoate: step 1/2. The protein operates within protein modification; protein lipoylation via exogenous pathway; protein N(6)-(lipoyl)lysine from lipoate: step 2/2. Functionally, catalyzes both the ATP-dependent activation of exogenously supplied lipoate to lipoyl-AMP and the transfer of the activated lipoyl onto the lipoyl domains of lipoate-dependent enzymes. The sequence is that of Lipoate-protein ligase A from Yersinia pseudotuberculosis serotype IB (strain PB1/+).